The primary structure comprises 266 residues: Ribosomal RNA small subunit methyltransferase A (266 aa).

Asn12, Leu14, Gly39, Glu61, Asp87, and Asn107 together coordinate S-adenosyl-L-methionine.

Belongs to the class I-like SAM-binding methyltransferase superfamily. rRNA adenine N(6)-methyltransferase family. RsmA subfamily.

The protein resides in the cytoplasm. The catalysed reaction is adenosine(1518)/adenosine(1519) in 16S rRNA + 4 S-adenosyl-L-methionine = N(6)-dimethyladenosine(1518)/N(6)-dimethyladenosine(1519) in 16S rRNA + 4 S-adenosyl-L-homocysteine + 4 H(+). Its function is as follows. Specifically dimethylates two adjacent adenosines (A1518 and A1519) in the loop of a conserved hairpin near the 3'-end of 16S rRNA in the 30S particle. May play a critical role in biogenesis of 30S subunits. This Nitratidesulfovibrio vulgaris (strain ATCC 29579 / DSM 644 / CCUG 34227 / NCIMB 8303 / VKM B-1760 / Hildenborough) (Desulfovibrio vulgaris) protein is Ribosomal RNA small subunit methyltransferase A.